Consider the following 244-residue polypeptide: Probable H/ACA ribonucleoprotein complex subunit 1-like protein (244 aa).

Disordered regions lie at residues 1–53 and 145–244; these read MSFR…GGYD and FLPQ…TKFE. RGG-box stretches follow at residues 4–51 and 153–222; these read RGGR…GRGG and RGRG…RGRG. Residues 160–173 are compositionally biased toward basic and acidic residues; sequence RGGDRGGRGSDRGG. Gly residues-rich tracts occupy residues 174 to 201 and 208 to 217; these read RGGF…GGFR and FRGGRGGDFG. Over residues 218–228 the composition is skewed to basic and acidic residues; the sequence is GRGRGDFKRSY.

It belongs to the GAR1 family. Component of the small nucleolar ribonucleoprotein particle containing H/ACA-type snoRNAs (H/ACA snoRNPs).

It localises to the nucleus. The protein resides in the nucleolus. Functionally, required for ribosome biogenesis. Part of a complex which catalyzes pseudouridylation of rRNA. This involves the isomerization of uridine such that the ribose is subsequently attached to C5, instead of the normal N1. Pseudouridine ('psi') residues may serve to stabilize the conformation of rRNAs. Involved in phase separation into sub-nucleolar condensates. Essential for normal development and also plays a role in fertility. This is Probable H/ACA ribonucleoprotein complex subunit 1-like protein from Caenorhabditis elegans.